A 201-amino-acid polypeptide reads, in one-letter code: Recombination protein RecR (201 aa).

The C4-type zinc finger occupies 57 to 72 (CADCRTFTEQDVCNIC). The Toprim domain occupies 81–176 (GQICVVESPA…EASRIAHGVP (96 aa)).

This sequence belongs to the RecR family.

In terms of biological role, may play a role in DNA repair. It seems to be involved in an RecBC-independent recombinational process of DNA repair. It may act with RecF and RecO. In Salmonella agona (strain SL483), this protein is Recombination protein RecR.